We begin with the raw amino-acid sequence, 353 residues long: Thiamine-phosphate synthase (353 aa).

Residues 1-128 (MKSMPFAPIA…AASAAAIRYG (128 aa)) are unknown. A thiamine-phosphate synthase region spans residues 129–353 (LYDLEVTVLQ…TSLQLLEALR (225 aa)). 4-amino-2-methyl-5-(diphosphooxymethyl)pyrimidine-binding positions include 185-189 (QYRNK) and Asn-217. Mg(2+) contacts are provided by Asp-218 and Asp-237. Ser-256 is a 4-amino-2-methyl-5-(diphosphooxymethyl)pyrimidine binding site. 282–284 (TAT) is a 2-[(2R,5Z)-2-carboxy-4-methylthiazol-5(2H)-ylidene]ethyl phosphate binding site. Lys-285 is a binding site for 4-amino-2-methyl-5-(diphosphooxymethyl)pyrimidine. Gly-312 provides a ligand contact to 2-[(2R,5Z)-2-carboxy-4-methylthiazol-5(2H)-ylidene]ethyl phosphate.

Belongs to the thiamine-phosphate synthase family. Mg(2+) is required as a cofactor.

It carries out the reaction 2-[(2R,5Z)-2-carboxy-4-methylthiazol-5(2H)-ylidene]ethyl phosphate + 4-amino-2-methyl-5-(diphosphooxymethyl)pyrimidine + 2 H(+) = thiamine phosphate + CO2 + diphosphate. The catalysed reaction is 2-(2-carboxy-4-methylthiazol-5-yl)ethyl phosphate + 4-amino-2-methyl-5-(diphosphooxymethyl)pyrimidine + 2 H(+) = thiamine phosphate + CO2 + diphosphate. It catalyses the reaction 4-methyl-5-(2-phosphooxyethyl)-thiazole + 4-amino-2-methyl-5-(diphosphooxymethyl)pyrimidine + H(+) = thiamine phosphate + diphosphate. Its pathway is cofactor biosynthesis; thiamine diphosphate biosynthesis; thiamine phosphate from 4-amino-2-methyl-5-diphosphomethylpyrimidine and 4-methyl-5-(2-phosphoethyl)-thiazole: step 1/1. Its function is as follows. Condenses 4-methyl-5-(beta-hydroxyethyl)thiazole monophosphate (THZ-P) and 2-methyl-4-amino-5-hydroxymethyl pyrimidine pyrophosphate (HMP-PP) to form thiamine monophosphate (TMP). The chain is Thiamine-phosphate synthase from Prochlorococcus marinus (strain MIT 9313).